Reading from the N-terminus, the 247-residue chain is Transmembrane protein 33 (247 aa).

The residue at position 2 (Ala-2) is an N-acetylalanine. Over Ala-2–Arg-31 the chain is Lumenal. A helical transmembrane segment spans residues Leu-32–Ala-52. At Ser-53–Leu-100 the chain is on the cytoplasmic side. The chain crosses the membrane as a helical span at residues Ile-101–Leu-121. Over His-122–Asn-155 the chain is Lumenal. A helical transmembrane segment spans residues Ile-156–Phe-176. Residues Ser-177–Ala-247 are Cytoplasmic-facing.

The protein belongs to the PER33/POM33 family. As to quaternary structure, interacts with EIF2AK3. Interacts with ARL6IP1, isoform RTN1-A of RTN1, isoform RTN2-B of RTN2, isoform 3 of RTN3 and isoform 3 of RTN4. Interacts with RNF5. Interacts with RNF26. Interacts with PKD2. In terms of tissue distribution, highly expressed in the liver and significantly in brain, lungs and kidneys.

Its subcellular location is the endoplasmic reticulum membrane. It is found in the melanosome. It localises to the nucleus envelope. Its function is as follows. Acts as a regulator of the tubular endoplasmic reticulum (ER) network by modulating intracellular calcium homeostasis. Mechanistically, stimulates PKD2 calcium-dependent activity. Suppresses the RTN3/4-induced formation of the ER tubules. Positively regulates PERK-mediated and IRE1-mediated unfolded protein response signaling. Plays an essential role in VEGF-mediated release of Ca(2+) from ER stores during angiogenesis. Also plays a role in the modulation of innate immune signaling through the cGAS-STING pathway by interacting with RNF26. Participates in lipid metabolism by acting as a downstream effector of the pyruvate kinase/PKM. Forms a complex with RNF5 to facilitate polyubiquitination and subsequent degradation of SCAP on the ER membrane. This Rattus norvegicus (Rat) protein is Transmembrane protein 33 (Tmem33).